A 1073-amino-acid chain; its full sequence is MMKVIWFSSLICLVIQCSGDSGPIICAGPIHSNKSAGIPHLLGYSEKICQIDRLIHVSSWLRNHSQFQGYVGQRGGRSQVSYYPAENSYSRWSGLLSPCDADWLGMLVVKKAKESDMIVPGPSYKGKVFFERPTFDGYVGWGCGSGKSRTESGELCSSDSGTSSGLLPSDRVLWIGDVACQPMTPIPEETFLELKSFSQSEFPDICKIDGIVFNQCEGESLPQPFDVAWMDVGHSHKIIMREHKTKWVQESSSKDFVCYKEGTGPCSESEEKACKTSGSCRGDMQFCKVAGCEHGEEASEAKCRCSLVHKPGEVVVSYGGMRVRPKCYGFSRMMATLEVNPPEQRIGQCTGCHLECINGGVRLITLTSELRSATVCASHFCSSASSGKKSTEIHFHSGSLVGKTAIHVKGALVDGTEFTFEGSCMFPDGCDAVDCTFCREFLKNPQCYPAKKWLFIIIVILLGYAGLMLLTNVLKAIGVWGSWVIAPVKLMFAIIKKLMRTVSCLVGKLMDRGRQVIHEEIGENGEGNQDDVRIEMARPRRVRHWMYSPVILTILAIGLAEGCDEMVHADSKLVSCRQGSGNMKECITTGRALLPAVNPGQEACLHFTAPGSPDSKCLKIKVKRINLKCKKSSSYFVPDARSRCTSVRRCRWAGDCQSGCPPHFTSNSFSDDWAGKMDRAGLGFSGCSDGCGGAACGCFNAAPSCIFWRKWVENPHGIIWKVSPCAAWVPSAVIELTMPSGEVRTFHPMSGIPTQVFKGVSVTYLGSDMEVSGLTDLCEIEELKSKKLALAPCNQAGMGVVGKVGEIQCSSEESARTIKKDGCIWNADLVGIELRVDDAVCYSKITSVEAVANYSAIPTTIGGLRFERSHDSQGKISGSPLDITAIRGSFSVNYRGLRLSLSEITATCTGEVTNVSGCYSCMTGAKVSIKLHSSKNSTAHVRCKGDETAFSVLEGVHSYIVSLSFDHAVVDEQCQLNCGGHESQVTLKGNLIFLDVPKFVDGSYMQTYHSTVPTGANIPSPTDWLNALFGNGLSRWILGVIGVLLGGLALFFLIMFLLKLGTKQVFRSRTKLA.

Positions 1–19 (MMKVIWFSSLICLVIQCSG) are cleaved as a signal peptide. Residues 20-453 (DSGPIICAGP…NPQCYPAKKW (434 aa)) are Lumenal-facing. A disulfide bridge links C26 with C49. N33 and N63 each carry an N-linked (GlcNAc...) asparagine; by host glycan. 8 disulfides stabilise this stretch: C143–C156, C180–C327, C206–C216, C258–C305, C287–C292, C349–C352, C356–C424, and C376–C381. A helical membrane pass occupies residues 454–474 (LFIIIVILLGYAGLMLLTNVL). Residues 475–521 (KAIGVWGSWVIAPVKLMFAIIKKLMRTVSCLVGKLMDRGRQVIHEEI) are golgi retention signal. Over 475–535 (KAIGVWGSWV…EGNQDDVRIE (61 aa)) the chain is Cytoplasmic. The internal signal sequence for glycoprotein C stretch occupies residues 536–562 (MARPRRVRHWMYSPVILTILAIGLAEG). Intrachain disulfides connect C563–C604, C576–C586, C629–C725, C644–C841, C650–C698, C656–C705, C660–C687, C691–C696, C778–C793, and C809–C823. The Lumenal segment spans residues 563-1036 (CDEMVHADSK…ALFGNGLSRW (474 aa)). The interval 650–656 (CRWAGDC) is fusion loop. The fusion loop stretch occupies residues 691–705 (CGGAACGCFNAAPSC). Residues N853 and N914 are each glycosylated (N-linked (GlcNAc...) asparagine; by host). 3 disulfides stabilise this stretch: C908-C978, C918-C921, and C943-C974. An N-linked (GlcNAc...) asparagine; by host glycan is attached at N936. The chain crosses the membrane as a helical span at residues 1037 to 1057 (ILGVIGVLLGGLALFFLIMFL). At 1058 to 1073 (LKLGTKQVFRSRTKLA) the chain is on the cytoplasmic side.

Belongs to the phlebovirus envelope glycoprotein family. Homodimer. Heterodimer with glycoprotein C. Homotrimer (postfusion). As to quaternary structure, heterodimer with glycoprotein N. In terms of processing, specific enzymatic cleavages in vivo yield mature proteins including glycoprotein C and glycoprotein N. Post-translationally, the cytoplasmic tail is Palmitoylated. Glycosylated. In terms of processing, palmitoylated.

The protein localises to the virion membrane. Its subcellular location is the host Golgi apparatus membrane. The protein resides in the host endoplasmic reticulum membrane. Structural component of the virion that interacts with glycoprotein C. It shields the hydrophobic fusion loops of the glycoprotein C, preventing premature fusion. The glycoprotein protrusions are arranged on an icosahedral lattice, with T=12 triangulation. They are able to attach the virion to the host cell receptor CD209/DC-SIGN and to promote fusion of membranes with the late endosome after clathrin-mediated endocytosis of the virion. Plays a role in the packaging of ribonucleoproteins and polymerase during virus assembly. Its function is as follows. Structural component of the virion that interacts with glycoprotein N. Acts as a class II fusion protein that is activated upon acidification and subsequent repositioning of the glycoprotein N. The glycoprotein protrusions are arranged on an icosahedral lattice, with T=12 triangulation. They are able to attach the virion to the host cell receptor CD209/DC-SIGN and to promote fusion of membranes with the late endosome after clathrin-mediated endocytosis of the virion. This chain is Envelopment polyprotein (GP), found in SFTS phlebovirus (isolate SFTSV/Human/China/HB29/2010) (Severe fever with thrombocytopenia virus).